Reading from the N-terminus, the 530-residue chain is Trigger factor (530 aa).

In terms of domain architecture, PPIase FKBP-type spans 162 to 243 (DDLVTIDLAG…VTKVCEQELP (82 aa)). Positions 432 to 530 (NALELDRIQP…KTAAKDDKSK (99 aa)) are disordered. Composition is skewed to basic and acidic residues over residues 459-478 (SAEKADGKATEESKAEEKAP) and 501-512 (KVVDAKSDDKPA).

The protein belongs to the FKBP-type PPIase family. Tig subfamily.

The protein localises to the cytoplasm. It catalyses the reaction [protein]-peptidylproline (omega=180) = [protein]-peptidylproline (omega=0). Its function is as follows. Involved in protein export. Acts as a chaperone by maintaining the newly synthesized protein in an open conformation. Functions as a peptidyl-prolyl cis-trans isomerase. In Cutibacterium acnes (strain DSM 16379 / KPA171202) (Propionibacterium acnes), this protein is Trigger factor.